We begin with the raw amino-acid sequence, 843 residues long: Elongation factor 2 (843 aa).

Residues 17–253 (HNIRNMSVIA…LWGENFFDPA (237 aa)) enclose the tr-type G domain. 26–33 (AHVDHGKS) is a GTP binding site. Phosphothreonine is present on residues Thr-57 and Thr-59. GTP is bound at residue 158–161 (NKMD). At His-700 the chain carries Diphthamide.

Belongs to the TRAFAC class translation factor GTPase superfamily. Classic translation factor GTPase family. EF-G/EF-2 subfamily. Phosphorylation by EF-2 kinase completely inactivates EF-2.

It localises to the cytoplasm. It carries out the reaction GTP + H2O = GDP + phosphate + H(+). Functionally, catalyzes the GTP-dependent ribosomal translocation step during translation elongation. During this step, the ribosome changes from the pre-translocational (PRE) to the post-translocational (POST) state as the newly formed A-site-bound peptidyl-tRNA and P-site-bound deacylated tRNA move to the P and E sites, respectively. Catalyzes the coordinated movement of the two tRNA molecules, the mRNA and conformational changes in the ribosome. The chain is Elongation factor 2 from Beta vulgaris (Sugar beet).